The primary structure comprises 120 residues: Glycine cleavage system H protein (120 aa).

The Lipoyl-binding domain occupies 17 to 99 (VATVGITEHA…QGAAWFFKLK (83 aa)). The residue at position 58 (K58) is an N6-lipoyllysine.

It belongs to the GcvH family. In terms of assembly, the glycine cleavage system is composed of four proteins: P, T, L and H. The cofactor is (R)-lipoate.

In terms of biological role, the glycine cleavage system catalyzes the degradation of glycine. The H protein shuttles the methylamine group of glycine from the P protein to the T protein. This is Glycine cleavage system H protein from Sinorhizobium fredii (strain NBRC 101917 / NGR234).